Consider the following 174-residue polypeptide: MDKRIILDDKAIDRTLTRIAHEILENNKGAHDLVLLGIRTRGIYLAQRIQSKIEKIDGITVPTGVLDVTQYRDDITDRVSQDVVAYKIDTDMNNRHVVIVDDVLYTGRTVRASLDAILDHVRPKRISLATLIDRGHRELPIRADFIGKNIPTALSEEIVVMLDEVDDKTQVYIK.

The PRPP-binding motif lies at 97 to 109 (VVIVDDVLYTGRT).

Belongs to the purine/pyrimidine phosphoribosyltransferase family. PyrR subfamily. In terms of assembly, homodimer and homohexamer; in equilibrium.

The catalysed reaction is UMP + diphosphate = 5-phospho-alpha-D-ribose 1-diphosphate + uracil. Functionally, regulates transcriptional attenuation of the pyrimidine nucleotide (pyr) operon by binding in a uridine-dependent manner to specific sites on pyr mRNA. This disrupts an antiterminator hairpin in the RNA and favors formation of a downstream transcription terminator, leading to a reduced expression of downstream genes. In terms of biological role, also displays a weak uracil phosphoribosyltransferase activity which is not physiologically significant. This is Bifunctional protein PyrR from Macrococcus caseolyticus (strain JCSC5402) (Macrococcoides caseolyticum).